The chain runs to 760 residues: Catecholate siderophore receptor Fiu (760 aa).

The signal sequence occupies residues Met-1 to Ala-31. The TBDR plug domain maps to Pro-67–Lys-175. The TBDR beta-barrel domain maps to Asp-180–Phe-760. Positions Arg-743–Phe-760 match the TonB C-terminal box motif.

It belongs to the TonB-dependent receptor family.

It is found in the cell outer membrane. Involved in the active transport across the outer membrane of iron complexed with catecholate siderophores such as dihydroxybenzoylserine and dihydroxybenzoate. It derives its energy for transport by interacting with the trans-periplasmic membrane protein TonB. Can also transport catechol-substituted cephalosporins. Receptor for microcins M, H47 and E492. The protein is Catecholate siderophore receptor Fiu (fiu) of Escherichia coli (strain K12).